Reading from the N-terminus, the 514-residue chain is Peptide chain release factor 3 (514 aa).

The tr-type G domain maps to 8-268; the sequence is KKRRTFAIIS…TFLEFAPEPH (261 aa). GTP-binding positions include 17–24, 85–89, and 139–142; these read SHPDAGKT, DTPGH, and NKLD.

Belongs to the TRAFAC class translation factor GTPase superfamily. Classic translation factor GTPase family. PrfC subfamily.

It is found in the cytoplasm. In terms of biological role, increases the formation of ribosomal termination complexes and stimulates activities of RF-1 and RF-2. It binds guanine nucleotides and has strong preference for UGA stop codons. It may interact directly with the ribosome. The stimulation of RF-1 and RF-2 is significantly reduced by GTP and GDP, but not by GMP. This is Peptide chain release factor 3 from Streptococcus pyogenes serotype M18 (strain MGAS8232).